A 521-amino-acid chain; its full sequence is 2-isopropylmalate synthase (521 aa).

The region spanning 12–274 (VIIFDTTLRD…WNKIDTTMLT (263 aa)) is the Pyruvate carboxyltransferase domain. Mn(2+) is bound by residues Asp21, His209, His211, and Asn245. The segment at 398–521 (KLVSLTVIAG…DMAAPAAAAS (124 aa)) is regulatory domain.

The protein belongs to the alpha-IPM synthase/homocitrate synthase family. LeuA type 1 subfamily. As to quaternary structure, homodimer. It depends on Mn(2+) as a cofactor.

The protein resides in the cytoplasm. The catalysed reaction is 3-methyl-2-oxobutanoate + acetyl-CoA + H2O = (2S)-2-isopropylmalate + CoA + H(+). The protein operates within amino-acid biosynthesis; L-leucine biosynthesis; L-leucine from 3-methyl-2-oxobutanoate: step 1/4. Catalyzes the condensation of the acetyl group of acetyl-CoA with 3-methyl-2-oxobutanoate (2-ketoisovalerate) to form 3-carboxy-3-hydroxy-4-methylpentanoate (2-isopropylmalate). The sequence is that of 2-isopropylmalate synthase from Rhodopseudomonas palustris (strain BisA53).